The sequence spans 149 residues: Calmodulin (149 aa).

A2 is subject to N-acetylalanine. EF-hand domains lie at 8–43, 44–79, 81–116, and 117–149; these read DQIS…LGQN, PTEA…KMKD, DSEE…LGEK, and LTDE…MMAK. The Ca(2+) site is built by D21, D23, D25, C27, E32, D57, D59, N61, T63, E68, D94, D96, N98, and E105. The residue at position 116 (K116) is an N6,N6,N6-trimethyllysine. Ca(2+)-binding residues include D130, D132, D134, Q136, and E141.

The protein belongs to the calmodulin family.

Functionally, calmodulin mediates the control of a large number of enzymes, ion channels and other proteins by Ca(2+). Among the enzymes to be stimulated by the calmodulin-Ca(2+) complex are a number of protein kinases and phosphatases. This chain is Calmodulin (CAM), found in Malus domestica (Apple).